Consider the following 315-residue polypeptide: MASTSRLDNNKVCCYAHPESPLIEDYRAGDMICSECGLVVGDRVIDVGSEWRTFSNEKSGVDPSRVGGPENPLLSGGDLSTIIGPGTGSASFDAFGAPKYQNRRTMSSSDRSLISAFKEISSMADRINLPKTIVDRANNLFKQVHDGKNLKGRSNDAKASACLYIACRQEGVPRTFKEICAVSKISKKEIGRCFKLTLKALETSVDLITTADFMCRFCANLDLPNMVQRAATHIAKKAVEMDIVPGRSPISVAAAAIYMASQASEHKRSQKEIGDIAGVADVTIRQSYKLMYPHAAKLFPEDFKFTTPIDQLPQM.

Residues 10 to 41 form a TFIIB-type zinc finger; it reads NKVCCYAHPESPLIEDYRAGDMICSECGLVVG. Cys14, His17, Cys33, and Cys36 together coordinate Zn(2+). A run of 2 repeats spans residues 123-199 and 217-293.

The protein belongs to the TFIIB family. In terms of assembly, belongs to the TFIID complex which is composed of TATA binding protein (Tbp) and a number of TBP-associated factors (Tafs). Associates with TFIID-IIA (DA complex) to form TFIID-IIA-IIB (DAB-complex) which is then recognized by polymerase II.

It localises to the nucleus. In terms of biological role, general factor that plays a major role in the activation of eukaryotic genes transcribed by RNA polymerase II. This Drosophila melanogaster (Fruit fly) protein is Transcription initiation factor IIB (TfIIB).